The sequence spans 72 residues: AICVSQAITYTDCTESGQNLCLCEGSNVCGKGNKCILGSNGKGNQCVTGEGTPNPESHNNGDFEEIPEEYLQ.

The N-terminal stretch at 1–7 (AICVSQA) is a signal peptide. Residues 8-10 (ITY) are interaction with thrombin active site. 3 cysteine pairs are disulfide-bonded: Cys13/Cys21, Cys23/Cys35, and Cys29/Cys46. Residues 47–72 (VTGEGTPNPESHNNGDFEEIPEEYLQ) are disordered. A glycan (O-linked (GalNAc...) threonine) is linked at Thr52. The interaction with fibrinogen-binding exosite of thrombin stretch occupies residues 62 to 72 (DFEEIPEEYLQ). Residues 62-72 (DFEEIPEEYLQ) are compositionally biased toward acidic residues. Residue Tyr70 is modified to Sulfotyrosine.

This sequence belongs to the protease inhibitor I14 (hirudin) family.

The protein localises to the secreted. In terms of biological role, hirudin is a potent thrombin-specific protease inhibitor. It forms a stable non-covalent complex with alpha-thrombin, thereby abolishing its ability to cleave fibrinogen. This chain is Hirudin variant-2, found in Hirudo medicinalis (Medicinal leech).